The primary structure comprises 497 residues: Ammonium transporter Rh type C (497 aa).

Topologically, residues 1–9 (MAWNTNLRG) are cytoplasmic. The helical transmembrane segment at 10-30 (RLPITCLILQVTMVVLFGVFV) threads the bilayer. Over 31–61 (RYDIQADAHWWLEKKRKNISSDVENEFYYRY) the chain is Extracellular. The N-linked (GlcNAc...) asparagine glycan is linked to N48. The chain crosses the membrane as a helical span at residues 62–82 (PSFEDVHAMVFVGFGFLMTYL). Residues 83 to 93 (QRYGFSAVGFN) are Cytoplasmic-facing. A helical transmembrane segment spans residues 94-114 (FLLAAFGIQWALLMQGWFHFF). Over 115–125 (EEGHILLSVEN) the chain is Extracellular. The chain crosses the membrane as a helical span at residues 126–145 (LIQADFCVASTCVAFGAVLG). Residues 146–151 (KISPMQ) are Cytoplasmic-facing. A helical membrane pass occupies residues 152–174 (LLIMTFFQVTLFTVNEFILLNLI). Topologically, residues 175–179 (EAKDA) are extracellular. Residues 180–200 (GGSMTIHTFGAYFGLTVTWIL) traverse the membrane as a helical segment. The Cytoplasmic segment spans residues 201-219 (YRKNLEQSKQRQSSVYHSD). The chain crosses the membrane as a helical span at residues 220–240 (LFAMIGTLFLWIYWPSFNSAS). Residues 241–251 (SFHGDTQHRAA) lie on the Extracellular side of the membrane. Residues 252 to 272 (LNTYLSLAASVLTTVAVSSVI) traverse the membrane as a helical segment. Residues 273–282 (HKKGKLDMVH) are Cytoplasmic-facing. The chain crosses the membrane as a helical span at residues 283 to 303 (IQNATLAGGVGVGTAAEMMLT). A topological domain (extracellular) is located at residue P304. The chain crosses the membrane as a helical span at residues 305-325 (YGALIVGFFCGILSTLGFAYL). The Cytoplasmic portion of the chain corresponds to 326-340 (SPFLESRLRIQDTCG). A helical transmembrane segment spans residues 341 to 361 (IHNLHGIPGIIGGIVGAVTAA). The Extracellular segment spans residues 362–395 (YSSPDVYGEPGIVHSFGFGGYKADWTKRMQGRSQ). A helical transmembrane segment spans residues 396–416 (IFGLLLSLAMALVGGIIVGFI). Residues 417 to 497 (LKLPFWGQAS…ATVTSSSLVH (81 aa)) lie on the Cytoplasmic side of the membrane.

The protein belongs to the ammonium transporter (TC 2.A.49) family. Rh subfamily. Homotrimer. Post-translationally, N-glycosylated. Expressed by connecting tubule cells and intercalated cells of the collecting duct in kidney (at protein level).

It localises to the cell membrane. The protein resides in the apical cell membrane. It catalyses the reaction NH4(+)(in) = NH4(+)(out). It carries out the reaction methylamine(out) = methylamine(in). The enzyme catalyses CO2(out) = CO2(in). In terms of biological role, ammonium transporter involved in the maintenance of acid-base homeostasis. Transports ammonium and its related derivative methylammonium across the plasma membrane of epithelial cells likely contributing to renal transepithelial ammonia transport and ammonia metabolism. Postulated to primarily mediate an electroneutral bidirectional transport of NH3 ammonia species according to a mechanism that implies interaction of an NH4(+) ion with acidic residues of the pore entry followed by dissociation of NH4(+) into NH3 and H(+). As a result NH3 transits through the central pore and is protonated on the extracellular side reforming NH4(+). May act as a CO2 channel providing for renal acid secretion. This Rattus norvegicus (Rat) protein is Ammonium transporter Rh type C (Rhcg).